Here is a 351-residue protein sequence, read N- to C-terminus: Peroxidase C1B (351 aa).

A signal peptide spans 1–28; that stretch reads MHSPSSTSFTWILITLGCLAFYASLSDA. Cystine bridges form between Cys39-Cys119, Cys72-Cys77, Cys125-Cys329, and Cys205-Cys237. N-linked (GlcNAc...) asparagine glycosylation occurs at Asn41. His70 acts as the Proton acceptor in catalysis. 5 residues coordinate Ca(2+): Asp71, Val74, Gly76, Asp78, and Ser80. Residue Asn85 is glycosylated (N-linked (GlcNAc...) asparagine). A substrate-binding site is contributed by Pro167. A heme b-binding site is contributed by His198. Ca(2+) is bound at residue Thr199. N-linked (GlcNAc...) asparagine glycans are attached at residues Asn214, Asn226, and Asn242. Ca(2+) contacts are provided by Asp250, Thr253, and Asp258. Residue Asn283 is glycosylated (N-linked (GlcNAc...) asparagine).

Belongs to the peroxidase family. Classical plant (class III) peroxidase subfamily. It depends on Ca(2+) as a cofactor. Requires heme b as cofactor.

It localises to the secreted. The protein localises to the vacuole. The enzyme catalyses 2 a phenolic donor + H2O2 = 2 a phenolic radical donor + 2 H2O. Its function is as follows. Removal of H(2)O(2), oxidation of toxic reductants, biosynthesis and degradation of lignin, suberization, auxin catabolism, response to environmental stresses such as wounding, pathogen attack and oxidative stress. These functions might be dependent on each isozyme/isoform in each plant tissue. This is Peroxidase C1B (PRXC1B) from Armoracia rusticana (Horseradish).